Consider the following 95-residue polypeptide: Protein Vpr (95 aa).

Positions 1-42 (MEQAPEDQGPQREPYNEWALELLEDLKNEALRHFPRPWLHGL) are homooligomerization. 3 positions are modified to phosphoserine; by host: S79, S93, and S95.

This sequence belongs to the HIV-1 VPR protein family. Homooligomer, may form homodimer. Interacts with p6-gag region of the Pr55 Gag precursor protein through a (Leu-X-X)4 motif near the C-terminus of the P6gag protein. Interacts with host UNG. May interact with host RAD23A/HHR23A. Interacts with host VPRBP/DCAF1, leading to hijack the CUL4A-RBX1-DDB1-DCAF1/VPRBP complex, mediating ubiquitination of host proteins such as TERT and ZGPAT and arrest of the cell cycle in G2 phase. In terms of processing, phosphorylated on several residues by host. These phosphorylations regulate VPR activity for the nuclear import of the HIV-1 pre-integration complex.

It is found in the virion. The protein resides in the host nucleus. Its subcellular location is the host extracellular space. In terms of biological role, during virus replication, may deplete host UNG protein, and incude G2-M cell cycle arrest. Acts by targeting specific host proteins for degradation by the 26S proteasome, through association with the cellular CUL4A-DDB1 E3 ligase complex by direct interaction with host VPRPB/DCAF-1. Cell cycle arrest reportedly occurs within hours of infection and is not blocked by antiviral agents, suggesting that it is initiated by the VPR carried into the virion. Additionally, VPR induces apoptosis in a cell cycle dependent manner suggesting that these two effects are mechanistically linked. Detected in the serum and cerebrospinal fluid of AIDS patient, VPR may also induce cell death to bystander cells. Its function is as follows. During virus entry, plays a role in the transport of the viral pre-integration (PIC) complex to the host nucleus. This function is crucial for viral infection of non-dividing macrophages. May act directly at the nuclear pore complex, by binding nucleoporins phenylalanine-glycine (FG)-repeat regions. The polypeptide is Protein Vpr (Pan troglodytes (Chimpanzee)).